Consider the following 132-residue polypeptide: Small ribosomal subunit protein uS11 (132 aa).

The interval 1–24 is disordered; the sequence is MAAQKQAARKPRRRDRKSVPVGQA. Over residues 7-16 the composition is skewed to basic residues; that stretch reads AARKPRRRDR.

Belongs to the universal ribosomal protein uS11 family. Part of the 30S ribosomal subunit. Interacts with proteins S7 and S18. Binds to IF-3.

Located on the platform of the 30S subunit, it bridges several disparate RNA helices of the 16S rRNA. Forms part of the Shine-Dalgarno cleft in the 70S ribosome. This is Small ribosomal subunit protein uS11 from Bifidobacterium adolescentis (strain ATCC 15703 / DSM 20083 / NCTC 11814 / E194a).